Consider the following 2448-residue polypeptide: Non-reducing polyketide synthase mapC (2448 aa).

The segment at 14 to 226 (VLFGPQCPDI…HHEAHREGIQ (213 aa)) is N-terminal acylcarrier protein transacylase domain (SAT). A disordered region spans residues 330 to 350 (GFSNESPQPSTASLSNSVQTF). A Ketosynthase family 3 (KS3) domain is found at 359–775 (ASPIAITGMA…GSNAALIVKE (417 aa)). Catalysis depends on for beta-ketoacyl synthase activity residues Cys524, His659, and His698. The interval 885-1188 (LCFGGQNGLT…HKIDLGGSSG (304 aa)) is malonyl-CoA:ACP transacylase (MAT) domain. Ser972 (for acyl/malonyl transferase activity) is an active-site residue. Residues 1256 to 1388 (GQEAGLLCQL…GTVCLHQERS (133 aa)) are N-terminal hotdog fold. One can recognise a PKS/mFAS DH domain in the interval 1256–1565 (GQEAGLLCQL…FTSVSIRSLT (310 aa)). The tract at residues 1261-1564 (LLCQLSESPD…RFTSVSIRSL (304 aa)) is product template (PT) domain. His1290 acts as the Proton acceptor; for dehydratase activity in catalysis. Residues 1414–1565 (ASNGLKGSTV…FTSVSIRSLT (152 aa)) are C-terminal hotdog fold. Asp1471 acts as the Proton donor; for dehydratase activity in catalysis. Residues 1610-1684 (AKDLATVQEM…GLVEHIFPGH (75 aa)) enclose the Carrier domain. O-(pantetheine 4'-phosphoryl)serine is present on Ser1644. Positions 1841 to 2076 (PYALEHDLLQ…GFEWVDWTNN (236 aa)) are methyltransferase (CMeT) domain. Residues Ser2227, Asp2385, and His2417 each act as for thioesterase activity in the active site.

The protein localises to the cytoplasm. The protein resides in the cytosol. It catalyses the reaction 3 malonyl-CoA + acetyl-CoA + S-adenosyl-L-methionine + H(+) = 5-methylorsellinate + S-adenosyl-L-homocysteine + 3 CO2 + 4 CoA. Its pathway is secondary metabolite biosynthesis; terpenoid biosynthesis. In terms of biological role, non-reducing polyketide synthase; part of the gene cluster that mediates the biosynthesis of mycophenolic acid (MPA), the first isolated antibiotic natural product in the world obtained from a culture of Penicillium brevicompactum in 1893. MpaC catalyzes the synthesis of 5-methylorsellinic acid (5MOA) via the condensation of 1 acetyl-CoA starter unit with 3 malonyl-CoA units and one methylation step. The first step of the pathway is the synthesis of 5-methylorsellinic acid (5MOA) by the cytosolic polyketide synthase mpaC. 5MOA is then converted to the phthalide compound 5,7-dihydroxy-4,6-dimethylphthalide (DHMP) by the endoplasmic reticulum-bound cytochrome P450 monooxygenase mpaDE. MpaDE first catalyzes hydroxylation of 5-MOA to 4,6-dihydroxy-2-(hydroxymethyl)-3-methylbenzoic acid (DHMB). MpaDE then acts as a lactone synthase that catalyzes the ring closure to convert DHMB into DHMP. The next step is the prenylation of DHMP by the Golgi apparatus-associated prenyltransferase mpaA to yield farnesyl-DHMP (FDHMP). The ER-bound oxygenase mpaB then mediates the oxidative cleavage the C19-C20 double bond in FDHMP to yield FDHMP-3C via a mycophenolic aldehyde intermediate. The O-methyltransferase mpaG catalyzes the methylation of FDHMP-3C to yield MFDHMP-3C. After the cytosolic methylation of FDHMP-3C, MFDHMP-3C enters into peroxisomes probably via free diffusion due to its low molecular weight. Upon a peroxisomal CoA ligation reaction, catalyzed by a beta-oxidation component enzyme acyl-CoA ligase ACL891, MFDHMP-3C-CoA would then be restricted to peroxisomes for the following beta-oxidation pathway steps. The peroxisomal beta-oxidation machinery than converts MFDHMP-3C-CoA into MPA_CoA, via a beta-oxidation chain-shortening process. Finally mpaH acts as a peroxisomal acyl-CoA hydrolase with high substrate specificity toward MPA-CoA to release the final product MPA. The chain is Non-reducing polyketide synthase mapC from Penicillium brevicompactum.